A 57-amino-acid polypeptide reads, in one-letter code: GQQPLCNDCFACARSLCICGDLVPQCHEGCQQCEKVDTLSGKPLYQCRSFEDYQCAN.

Disulfide bonds link cysteine 6–cysteine 55, cysteine 12–cysteine 17, cysteine 26–cysteine 33, and cysteine 30–cysteine 47.

It belongs to the Bowman-Birk serine protease inhibitor family. As to expression, expressed in bulb (at protein level).

Serine protease inhibitor. Inhibits trypsin (Ki = 110 nM) and very weakly inhibits chymotrypsin (Ki =1200 nM). Does not inhibit bacterial subtilisin. This is Bowman-Birk type proteinase inhibitor B4 from Hyacinthus orientalis (Common hyacinth).